Here is a 255-residue protein sequence, read N- to C-terminus: 3-deoxy-manno-octulosonate cytidylyltransferase (255 aa).

This sequence belongs to the KdsB family.

Its subcellular location is the cytoplasm. It carries out the reaction 3-deoxy-alpha-D-manno-oct-2-ulosonate + CTP = CMP-3-deoxy-beta-D-manno-octulosonate + diphosphate. The protein operates within nucleotide-sugar biosynthesis; CMP-3-deoxy-D-manno-octulosonate biosynthesis; CMP-3-deoxy-D-manno-octulosonate from 3-deoxy-D-manno-octulosonate and CTP: step 1/1. It participates in bacterial outer membrane biogenesis; lipopolysaccharide biosynthesis. In terms of biological role, activates KDO (a required 8-carbon sugar) for incorporation into bacterial lipopolysaccharide in Gram-negative bacteria. This chain is 3-deoxy-manno-octulosonate cytidylyltransferase, found in Xanthobacter autotrophicus (strain ATCC BAA-1158 / Py2).